The primary structure comprises 374 residues: Probable trehalose-phosphate phosphatase 9 (374 aa).

The protein belongs to the trehalose phosphatase family. A divalent metal cation is required as a cofactor.

The catalysed reaction is alpha,alpha-trehalose 6-phosphate + H2O = alpha,alpha-trehalose + phosphate. Its pathway is glycan biosynthesis; trehalose biosynthesis. Removes the phosphate from trehalose 6-phosphate to produce free trehalose. Trehalose accumulation in plant may improve abiotic stress tolerance. The polypeptide is Probable trehalose-phosphate phosphatase 9 (TPP9) (Oryza sativa subsp. japonica (Rice)).